Here is a 429-residue protein sequence, read N- to C-terminus: UDP-N-acetylglucosamine 1-carboxyvinyltransferase (429 aa).

A phosphoenolpyruvate-binding site is contributed by 22–23 (KN). Position 102 (Arg-102) interacts with UDP-N-acetyl-alpha-D-glucosamine. Cys-126 acts as the Proton donor in catalysis. Cys-126 carries the 2-(S-cysteinyl)pyruvic acid O-phosphothioketal modification. UDP-N-acetyl-alpha-D-glucosamine is bound by residues 131-135 (RPVDL), Asp-316, and Ile-338.

This sequence belongs to the EPSP synthase family. MurA subfamily.

It localises to the cytoplasm. It carries out the reaction phosphoenolpyruvate + UDP-N-acetyl-alpha-D-glucosamine = UDP-N-acetyl-3-O-(1-carboxyvinyl)-alpha-D-glucosamine + phosphate. Its pathway is cell wall biogenesis; peptidoglycan biosynthesis. In terms of biological role, cell wall formation. Adds enolpyruvyl to UDP-N-acetylglucosamine. This is UDP-N-acetylglucosamine 1-carboxyvinyltransferase from Methylobacterium nodulans (strain LMG 21967 / CNCM I-2342 / ORS 2060).